The following is a 308-amino-acid chain: Aspartate carbamoyltransferase catalytic subunit (308 aa).

Positions 57 and 58 each coordinate carbamoyl phosphate. Residue Lys86 coordinates L-aspartate. Carbamoyl phosphate-binding residues include Arg107, His135, and Gln138. L-aspartate-binding residues include Arg168 and Arg228. Positions 267 and 268 each coordinate carbamoyl phosphate.

It belongs to the aspartate/ornithine carbamoyltransferase superfamily. ATCase family. As to quaternary structure, heterododecamer (2C3:3R2) of six catalytic PyrB chains organized as two trimers (C3), and six regulatory PyrI chains organized as three dimers (R2).

The catalysed reaction is carbamoyl phosphate + L-aspartate = N-carbamoyl-L-aspartate + phosphate + H(+). It participates in pyrimidine metabolism; UMP biosynthesis via de novo pathway; (S)-dihydroorotate from bicarbonate: step 2/3. In terms of biological role, catalyzes the condensation of carbamoyl phosphate and aspartate to form carbamoyl aspartate and inorganic phosphate, the committed step in the de novo pyrimidine nucleotide biosynthesis pathway. The chain is Aspartate carbamoyltransferase catalytic subunit from Leptospira borgpetersenii serovar Hardjo-bovis (strain JB197).